The following is a 56-amino-acid chain: Photosystem II assembly protein Psb34 (56 aa).

The Cytoplasmic portion of the chain corresponds to 1 to 33 (MRYTTDEGGRLNNFAIEPKVYQAQPWTPQQKVR). Residues 34-54 (AALLVGGGLLLVAGLVAIAVG) traverse the membrane as a helical segment. Residues 55–56 (VS) lie on the Extracellular side of the membrane.

Part of photosystem II (PSII) assembly intermediate complex PSII-I; crystallized from a strain without psbJ, it forms monomeric PSII before addition of the oxygen evolving complex. PSII-I includes 3 assembly factors not found in mature PSII (Psb27, Psb28 and Psb34). The N-terminus of Psb34 (this protein) binds to CP47 (psbB) in close proximity to PsbH on the cytoplasmic face of PSII.

The protein localises to the cellular thylakoid membrane. In terms of biological role, involved in photosystem II (PSII) assembly and/or repair, probably in conversion of late PSII assembly intermediates into mature dimeric PSII. This chain is Photosystem II assembly protein Psb34, found in Thermosynechococcus vestitus (strain NIES-2133 / IAM M-273 / BP-1).